A 421-amino-acid polypeptide reads, in one-letter code: D-amino acid dehydrogenase (421 aa).

3–17 provides a ligand contact to FAD; it reads VIVLGSGVIGVASAY.

It belongs to the DadA oxidoreductase family. FAD is required as a cofactor.

The catalysed reaction is a D-alpha-amino acid + A + H2O = a 2-oxocarboxylate + AH2 + NH4(+). Its pathway is amino-acid degradation; D-alanine degradation; NH(3) and pyruvate from D-alanine: step 1/1. In terms of biological role, oxidative deamination of D-amino acids. The polypeptide is D-amino acid dehydrogenase (Acinetobacter baumannii (strain AB307-0294)).